A 172-amino-acid polypeptide reads, in one-letter code: Large ribosomal subunit protein uL10 (172 aa).

The protein belongs to the universal ribosomal protein uL10 family. As to quaternary structure, part of the ribosomal stalk of the 50S ribosomal subunit. The N-terminus interacts with L11 and the large rRNA to form the base of the stalk. The C-terminus forms an elongated spine to which L12 dimers bind in a sequential fashion forming a multimeric L10(L12)X complex.

In terms of biological role, forms part of the ribosomal stalk, playing a central role in the interaction of the ribosome with GTP-bound translation factors. This is Large ribosomal subunit protein uL10 from Caulobacter sp. (strain K31).